The primary structure comprises 676 residues: DNA ligase (676 aa).

NAD(+)-binding positions include 34–38 (DQEFD), 83–84 (SL), and E117. K119 serves as the catalytic N6-AMP-lysine intermediate. NAD(+) contacts are provided by R140, E177, K285, and K309. Residues C403, C406, C427, and C434 each contribute to the Zn(2+) site. Residues 595-676 (NNNGLLKNKT…EWLKMLNKSG (82 aa)) form the BRCT domain.

Belongs to the NAD-dependent DNA ligase family. LigA subfamily. Mg(2+) is required as a cofactor. Mn(2+) serves as cofactor.

The catalysed reaction is NAD(+) + (deoxyribonucleotide)n-3'-hydroxyl + 5'-phospho-(deoxyribonucleotide)m = (deoxyribonucleotide)n+m + AMP + beta-nicotinamide D-nucleotide.. In terms of biological role, DNA ligase that catalyzes the formation of phosphodiester linkages between 5'-phosphoryl and 3'-hydroxyl groups in double-stranded DNA using NAD as a coenzyme and as the energy source for the reaction. It is essential for DNA replication and repair of damaged DNA. The sequence is that of DNA ligase from Pelagibacter ubique (strain HTCC1062).